A 947-amino-acid chain; its full sequence is Protein translocase subunit SecA 1 (947 aa).

ATP contacts are provided by residues Q87, 105-109, and D525; that span reads GEGKT. The interval 907-937 is disordered; that stretch reads DDADKAARDPNRPETWGKVGRNEDCPCNSGK. Positions 908–918 are enriched in basic and acidic residues; it reads DADKAARDPNR. The Zn(2+) site is built by C931, C933, C942, and H943.

It belongs to the SecA family. As to quaternary structure, monomer and homodimer. Part of the essential Sec protein translocation apparatus which comprises SecA, SecYEG and auxiliary proteins SecDF-YajC and YidC. Zn(2+) serves as cofactor.

The protein resides in the cell inner membrane. It localises to the cytoplasm. The catalysed reaction is ATP + H2O + cellular proteinSide 1 = ADP + phosphate + cellular proteinSide 2.. In terms of biological role, part of the Sec protein translocase complex. Interacts with the SecYEG preprotein conducting channel. Has a central role in coupling the hydrolysis of ATP to the transfer of proteins into and across the cell membrane, serving both as a receptor for the preprotein-SecB complex and as an ATP-driven molecular motor driving the stepwise translocation of polypeptide chains across the membrane. This is Protein translocase subunit SecA 1 from Rhodopseudomonas palustris (strain BisA53).